Reading from the N-terminus, the 130-residue chain is Small ribosomal subunit protein uS9 (130 aa).

This sequence belongs to the universal ribosomal protein uS9 family.

In Hydrogenovibrio crunogenus (strain DSM 25203 / XCL-2) (Thiomicrospira crunogena), this protein is Small ribosomal subunit protein uS9.